The chain runs to 168 residues: G/U mismatch-specific DNA glycosylase (168 aa).

It belongs to the uracil-DNA glycosylase (UDG) superfamily. TDG/mug family. In terms of assembly, binds DNA as a monomer.

The protein resides in the cytoplasm. It catalyses the reaction Specifically hydrolyzes mismatched double-stranded DNA and polynucleotides, releasing free uracil.. Functionally, excises ethenocytosine and uracil, which can arise by alkylation or deamination of cytosine, respectively, from the corresponding mispairs with guanine in ds-DNA. It is capable of hydrolyzing the carbon-nitrogen bond between the sugar-phosphate backbone of the DNA and the mispaired base. The complementary strand guanine functions in substrate recognition. Required for DNA damage lesion repair in stationary-phase cells. In Salmonella gallinarum (strain 287/91 / NCTC 13346), this protein is G/U mismatch-specific DNA glycosylase.